The following is a 1137-amino-acid chain: Protein sel-1 homolog 3 (1137 aa).

Residues 1–42 (MQWRGAGLWWPRRRQQQQQQQPPPPAFGPPAAAMVPPSRGVS) form a disordered region. N206 and N387 each carry an N-linked (GlcNAc...) asparagine glycan. 7 Sel1-like repeats span residues 575-609 (HKAS…GQGS), 611-647 (RLSS…TKTP), 694-730 (AAAQ…LETE), 732-767 (PALI…SKGL), 768-800 (HQAV…EMGN), 801-839 (PDAS…QGGH), and 840-877 (IEGT…EKNG). A Phosphoserine modification is found at S613. N-linked (GlcNAc...) asparagine glycosylation is present at N942. Residues 952–988 (SFAYLKMGDLYYYGHQNQSQDLELSVQMYAQAALDGD) form a Sel1-like 8 repeat. A helical membrane pass occupies residues 1067 to 1087 (LIYFLGTFLLSVVIAWMVLYL). The interval 1100–1137 (AWVSADPTSSTPSPAVPPAADASDHDPPMMANGPEPRG) is disordered. Residues 1102-1120 (VSADPTSSTPSPAVPPAAD) are compositionally biased toward low complexity.

It localises to the membrane. This Mus musculus (Mouse) protein is Protein sel-1 homolog 3 (Sel1l3).